A 563-amino-acid polypeptide reads, in one-letter code: Eukaryotic translation initiation factor 3 subunit D-1 (563 aa).

The segment at 98-167 (VQKPPHQRGR…GPPPKMRESS (70 aa)) is disordered. Residues 100 to 121 (KPPHQRGRFRNMRNSRSGRGRN) show a composition bias toward basic residues. Thr128 carries the post-translational modification Phosphothreonine. Positions 291 to 305 (EFDLLTVNESSVEPP) are RNA gate.

This sequence belongs to the eIF-3 subunit D family. Component of the eukaryotic translation initiation factor 3 (eIF-3) complex. The eIF-3 complex interacts with pix.

The protein localises to the cytoplasm. MRNA cap-binding component of the eukaryotic translation initiation factor 3 (eIF-3) complex, which is involved in protein synthesis of a specialized repertoire of mRNAs and, together with other initiation factors, stimulates binding of mRNA and methionyl-tRNAi to the 40S ribosome. The eIF-3 complex specifically targets and initiates translation of a subset of mRNAs involved in cell proliferation. In the eIF-3 complex, eif3d specifically recognizes and binds the 7-methylguanosine cap of a subset of mRNAs. This Drosophila grimshawi (Hawaiian fruit fly) protein is Eukaryotic translation initiation factor 3 subunit D-1.